The sequence spans 152 residues: Large-conductance mechanosensitive channel (152 aa).

Transmembrane regions (helical) follow at residues valine 26–alanine 46, isoleucine 50–threonine 70, and isoleucine 92–leucine 112.

It belongs to the MscL family. As to quaternary structure, homopentamer.

The protein localises to the cell inner membrane. Functionally, channel that opens in response to stretch forces in the membrane lipid bilayer. May participate in the regulation of osmotic pressure changes within the cell. The protein is Large-conductance mechanosensitive channel of Gluconobacter oxydans (strain 621H) (Gluconobacter suboxydans).